The primary structure comprises 159 residues: Pathogenesis-related leaf protein 6 (159 aa).

An N-terminal signal peptide occupies residues 1–24 (MGLFNISLLLTCLMVLAIFHSCEA). Pyrrolidone carboxylic acid is present on Q25. One can recognise an SCP domain in the interval 32 to 147 (LAVHNDARAQ…NGWWFISCNY (116 aa)). 3 cysteine pairs are disulfide-bonded: C68-C136, C109-C115, and C131-C145.

It belongs to the CRISP family.

Its function is as follows. Probably involved in the defense reaction of plants against pathogens. Has antifungal activity. This chain is Pathogenesis-related leaf protein 6 (PR1B1), found in Solanum lycopersicum (Tomato).